We begin with the raw amino-acid sequence, 444 residues long: Biotin carboxylase 2 (444 aa).

Residues 1–444 (MFTKVLIANR…VTTDFLKQHL (444 aa)) form the Biotin carboxylation domain. ATP-binding positions include Lys116, Lys158, 164–165 (GG), 200–203 (EKVI), His208, and His235. Positions 120–317 (RKAMEAAGVP…LVEQQLRIAA (198 aa)) constitute an ATP-grasp domain. Lys237 lines the hydrogencarbonate pocket. ATP contacts are provided by Glu275 and Glu288. Mg(2+) contacts are provided by Glu275, Glu288, and Asn290. The Mn(2+) site is built by Glu275, Glu288, and Asn290. Positions 292, 295, and 338 each coordinate hydrogencarbonate. Residue Arg292 is part of the active site. Residue Arg338 coordinates biotin.

As to quaternary structure, acetyl-CoA carboxylase is a heterohexamer of biotin carboxyl carrier protein, biotin carboxylase and the two subunits of carboxyl transferase in a 2:2 complex. The cofactor is Mg(2+). Mn(2+) is required as a cofactor.

It catalyses the reaction N(6)-biotinyl-L-lysyl-[protein] + hydrogencarbonate + ATP = N(6)-carboxybiotinyl-L-lysyl-[protein] + ADP + phosphate + H(+). It functions in the pathway lipid metabolism; malonyl-CoA biosynthesis; malonyl-CoA from acetyl-CoA: step 1/1. Its function is as follows. This protein is a component of the acetyl coenzyme A carboxylase complex; first, biotin carboxylase catalyzes the carboxylation of the carrier protein and then the transcarboxylase transfers the carboxyl group to form malonyl-CoA. The sequence is that of Biotin carboxylase 2 (accC2) from Bacillus subtilis (strain 168).